The primary structure comprises 285 residues: Vacuolar protein sorting-associated protein 37B (285 aa).

The interaction with IST1 stretch occupies residues 50 to 170 (ASNRSLAEGN…ELVLKGQRHP (121 aa)). Positions 84 to 173 (FEAYQIKKTK…LKGQRHPQAG (90 aa)) constitute a VPS37 C-terminal domain. Disordered stretches follow at residues 167–215 (QRHP…PPVP) and 242–285 (PLPP…FILQ). Composition is skewed to pro residues over residues 173 to 184 (GAPPPPRVPEPS) and 206 to 215 (RIPPPPPPVP). Residues 250-259 (PSQQGFSAQL) show a composition bias toward polar residues. The span at 262-275 (PYPPALPQRPPPRM) shows a compositional bias: pro residues. A compositionally biased stretch (low complexity) spans 276–285 (APHQPGFILQ).

It belongs to the VPS37 family. As to quaternary structure, component of the ESCRT-I complex (endosomal sorting complex required for transport I) which consists of TSG101, VPS28, a VPS37 protein (VPS37A to -D) and MVB12A or MVB12B in a 1:1:1:1 stoichiometry. Interacts with TSG101, VPS28, MVB12A and MVB12B. Component of the ESCRT-I complex (endosomal sorting complex required for transport I) which consists of TSG101, VPS28, a VPS37 protein (VPS37A to -D) and UBAP1 in a 1:1:1:1 stoichiometry. Interacts with CEP55. Interacts with IST1.

The protein localises to the late endosome membrane. In terms of biological role, component of the ESCRT-I complex, a regulator of vesicular trafficking process. Required for the sorting of endocytic ubiquitinated cargos into multivesicular bodies. May be involved in cell growth and differentiation. This is Vacuolar protein sorting-associated protein 37B (Vps37b) from Mus musculus (Mouse).